The sequence spans 358 residues: MVDSLQKPELEELRPGIKAPAKETILTPRFYTTDFEAMAKMDLSPNEDELRAILEEFRADYNRKHFVRTPEFDGSAADMDPETKKVFVEFLEQSCTSEFSGFLLYKELSRRIKNRNPLLAECFELMARDEARHAGFLNKSMSDFDLQLDLGFLTANKKYTYFKPAYIFYATYLSEKIGYWRYITIFRHLEQHPEYRIYPIFKFFENWCQDENRHGDFFDALMKAQPSTVRGFVAKLWCRFFLLAVFATMYIRDVQRKEFYEALGLDAREYDRHVIAKTNETSARVFPVVLDVDHPKFYDRLETCIANNNQLAAIEATSAPKPVKVLRKLPYYLSNGLQLLKLYLVKPLESDVYQPAVR.

It belongs to the AcsF family. Requires Fe cation as cofactor.

The catalysed reaction is Mg-protoporphyrin IX 13-monomethyl ester + 3 NADPH + 3 O2 + 2 H(+) = 3,8-divinyl protochlorophyllide a + 3 NADP(+) + 5 H2O. The protein operates within porphyrin-containing compound metabolism; chlorophyll biosynthesis (light-independent). In terms of biological role, catalyzes the formation of the isocyclic ring in chlorophyll biosynthesis. Mediates the cyclase reaction, which results in the formation of divinylprotochlorophyllide (Pchlide) characteristic of all chlorophylls from magnesium-protoporphyrin IX 13-monomethyl ester (MgPMME). The polypeptide is Magnesium-protoporphyrin IX monomethyl ester [oxidative] cyclase (Synechococcus elongatus (strain ATCC 33912 / PCC 7942 / FACHB-805) (Anacystis nidulans R2)).